The chain runs to 113 residues: Cytochrome c oxidase subunit 7A2-like, mitochondrial (113 aa).

The transit peptide at 1–54 (MYYKFSSFTQKLAGAWASEAYTPQGLKPVSTEAPPIIFATPTKLTSSVTAYDYS) directs the protein to the mitochondrion. Lys-68 carries the N6-acetyllysine modification. The helical transmembrane segment at 81-106 (PDQMLYRTTMALTLGGTIYCLIALYM) threads the bilayer.

Belongs to the cytochrome c oxidase VIIa family. As to quaternary structure, interacts with the mitochondrial respiratory complexes III (CIII) and IV (CIV), promoting their association.

The protein resides in the mitochondrion inner membrane. The protein operates within energy metabolism; oxidative phosphorylation. Assembly factor that mediates the formation of some mitochondrial respiratory supercomplexes (respirasomes), thereby promoting oxidative phosphorylation and energy metabolism. Acts as a molecular adapter that associates with both mitochondrial respiratory complexes III (CIII) and IV (CIV), promoting their association. Mediates the formation of various mitochondrial respiratory supercomplexes, such as MCIII(2)IV(2), composed of two CIII and two CIV, and the CS-respirasome (MCI(1)III(2)IV(2)), composed of one CI, two CIII and two CIV. Not involved in the formation of the canonical respirasome (MCI(1)III(2)IV(1)), composed of one CI, two CIII and one CIV. The formation of different respirasomes is important for cell adaptation to oxygen conditions and prevent metabolic exhaustion: supercomplexes mediated by COX7A2L/SCAF1 are required to maintain oxidative phosphorylation upon low oxygen conditions and promote metabolic rewiring toward glycolysis. This Mus musculus (Mouse) protein is Cytochrome c oxidase subunit 7A2-like, mitochondrial.